The chain runs to 449 residues: 23S rRNA (uracil(1939)-C(5))-methyltransferase RlmD (449 aa).

Positions 15-73 constitute a TRAM domain; it reads KAIPAKNLTVTVTSLDPFGQGVARHEGKTVFVTGVLPGEQAEVQLTEDKRQFSHAKLKR. [4Fe-4S] cluster is bound by residues Cys86, Cys92, Cys95, and Cys173. 6 residues coordinate S-adenosyl-L-methionine: Gln276, Phe305, Asn310, Glu326, Asn353, and Asp374. Cys400 (nucleophile) is an active-site residue.

Belongs to the class I-like SAM-binding methyltransferase superfamily. RNA M5U methyltransferase family. RlmD subfamily.

It catalyses the reaction uridine(1939) in 23S rRNA + S-adenosyl-L-methionine = 5-methyluridine(1939) in 23S rRNA + S-adenosyl-L-homocysteine + H(+). Functionally, catalyzes the formation of 5-methyl-uridine at position 1939 (m5U1939) in 23S rRNA. This is 23S rRNA (uracil(1939)-C(5))-methyltransferase RlmD from Pectobacterium carotovorum subsp. carotovorum (strain PC1).